The following is a 347-amino-acid chain: Phenylalanine--tRNA ligase alpha subunit (347 aa).

Residue E261 participates in Mg(2+) binding.

This sequence belongs to the class-II aminoacyl-tRNA synthetase family. Phe-tRNA synthetase alpha subunit type 1 subfamily. Tetramer of two alpha and two beta subunits. Requires Mg(2+) as cofactor.

The protein localises to the cytoplasm. It catalyses the reaction tRNA(Phe) + L-phenylalanine + ATP = L-phenylalanyl-tRNA(Phe) + AMP + diphosphate + H(+). The chain is Phenylalanine--tRNA ligase alpha subunit from Streptococcus equi subsp. zooepidemicus (strain MGCS10565).